The primary structure comprises 494 residues: Bifunctional pantoate ligase/cytidylate kinase (494 aa).

A pantoate--beta-alanine ligase region spans residues 1 to 258 (MHFVPTMGGL…CGSTRLIDHA (258 aa)). Position 7–14 (7–14 (MGGLHHGH)) interacts with ATP. His14 (proton donor) is an active-site residue. Residue Gln41 coordinates (R)-pantoate. Gln41 provides a ligand contact to beta-alanine. Position 130–133 (130–133 (GEKD)) interacts with ATP. (R)-pantoate is bound at residue Gln136. Residues Val159 and 167 to 170 (SSSR) contribute to the ATP site. Positions 259–494 (FLMTRSPLVA…VGEEVWPTPV (236 aa)) are cytidylate kinase.

The protein in the N-terminal section; belongs to the pantothenate synthetase family. It in the C-terminal section; belongs to the cytidylate kinase family. Type 1 subfamily.

It is found in the cytoplasm. The enzyme catalyses (R)-pantoate + beta-alanine + ATP = (R)-pantothenate + AMP + diphosphate + H(+). The catalysed reaction is CMP + ATP = CDP + ADP. It carries out the reaction dCMP + ATP = dCDP + ADP. It participates in cofactor biosynthesis; (R)-pantothenate biosynthesis; (R)-pantothenate from (R)-pantoate and beta-alanine: step 1/1. Functionally, catalyzes the condensation of pantoate with beta-alanine in an ATP-dependent reaction via a pantoyl-adenylate intermediate. Its function is as follows. Catalyzes the transfer of a phosphate group from ATP to either CMP or dCMP to form CDP or dCDP and ADP, respectively. In Synechococcus sp. (strain CC9311), this protein is Bifunctional pantoate ligase/cytidylate kinase.